A 113-amino-acid polypeptide reads, in one-letter code: Nucleoid-associated protein CLJ_B0037 (113 aa).

Residues 93–102 show a composition bias toward basic and acidic residues; the sequence is EEDTSSEVKR. The interval 93–113 is disordered; that stretch reads EEDTSSEVKRLTGGMNLPGMF.

The protein belongs to the YbaB/EbfC family. In terms of assembly, homodimer.

Its subcellular location is the cytoplasm. It localises to the nucleoid. Its function is as follows. Binds to DNA and alters its conformation. May be involved in regulation of gene expression, nucleoid organization and DNA protection. This chain is Nucleoid-associated protein CLJ_B0037, found in Clostridium botulinum (strain 657 / Type Ba4).